The sequence spans 201 residues: Small ribosomal subunit protein uS5 (201 aa).

The disordered stretch occupies residues 1–27; that stretch reads MAGPQRRGSGAGGGERRDRKGRDGGAA. Over residues 14 to 23 the composition is skewed to basic and acidic residues; sequence GERRDRKGRD. The S5 DRBM domain occupies 34-97; that stretch reads YVERVVAINR…EEAKKHFFKV (64 aa).

This sequence belongs to the universal ribosomal protein uS5 family. Part of the 30S ribosomal subunit. Contacts proteins S4 and S8.

Its function is as follows. With S4 and S12 plays an important role in translational accuracy. Located at the back of the 30S subunit body where it stabilizes the conformation of the head with respect to the body. The protein is Small ribosomal subunit protein uS5 of Streptomyces avermitilis (strain ATCC 31267 / DSM 46492 / JCM 5070 / NBRC 14893 / NCIMB 12804 / NRRL 8165 / MA-4680).